The sequence spans 96 residues: Small ribosomal subunit protein bS16 (96 aa).

Belongs to the bacterial ribosomal protein bS16 family.

This is Small ribosomal subunit protein bS16 from Oenococcus oeni (strain ATCC BAA-331 / PSU-1).